Here is a 644-residue protein sequence, read N- to C-terminus: Adhesion G-protein coupled receptor F2 (644 aa).

Positions 1 to 18 (MIPAHWLYCLMLLLPIES) are cleaved as a signal peptide. Residues 19 to 386 (CRILCQASSK…ESPVLTYITY (368 aa)) are Extracellular-facing. N-linked (GlcNAc...) asparagine glycosylation is found at Asn-155, Asn-219, Asn-293, and Asn-311. Residues 233–377 (SRGSLGKNFT…SILMSPNTLE (145 aa)) enclose the GAIN-B domain. 2 disulfides stabilise this stretch: Cys-329/Cys-356 and Cys-344/Cys-358. The tract at residues 329 to 377 (CVGWHSLESRWDWRACKTIQENSRQAVCRCRPNKLYTSFSILMSPNTLE) is GPS. A helical membrane pass occupies residues 387–407 (IGLGISICSLIICLAIEVLVW). Topologically, residues 408-422 (SQVTKTEISYLRHLC) are cytoplasmic. A helical membrane pass occupies residues 423–443 (IANIAATLLMADAWFIVASFL). Topologically, residues 444-465 (SGPVLHHNGCVAATFFVHFFYL) are extracellular. The chain crosses the membrane as a helical span at residues 466 to 486 (SVFFWMLAKALLILYGILIVF). The Cytoplasmic segment spans residues 487-493 (HTLPKSC). The helical transmembrane segment at 494-514 (LVASLFSVGYGCPLVIAIITL) threads the bilayer. Residues 515–541 (AVTEPGKGYLRPEACWLNWDMTKALLA) are Extracellular-facing. A helical membrane pass occupies residues 542-562 (FVVPALAIVVVNLITVTMVII). Topologically, residues 563-585 (KTQRAAIGSSMFQEVRAIVRICK) are cytoplasmic. Residues 586–606 (NIAILTPLLGLTWGFGIATVI) form a helical membrane-spanning segment. Residues 607–610 (NGHS) are Extracellular-facing. Residues 611 to 631 (LAFHIIFSLLNALQVSPDAAV) form a helical membrane-spanning segment.

It belongs to the G-protein coupled receptor 2 family. Adhesion G-protein coupled receptor (ADGR) subfamily. As to expression, mainly expressed in skin and heart, and very weakly in lung and spleen. Detected in all epidermal layers of skin.

It localises to the membrane. Functionally, orphan receptor. The chain is Adhesion G-protein coupled receptor F2 (Adgrf2) from Mus musculus (Mouse).